Reading from the N-terminus, the 531-residue chain is Endoglucanase 7 (531 aa).

The N-terminal stretch at 1–27 (MRGRALVLVAALLLQLLLLAAAGGAGA) is a signal peptide. Asp89 acts as the Nucleophile in catalysis. Catalysis depends on residues His430, Asp482, and Glu491.

Belongs to the glycosyl hydrolase 9 (cellulase E) family. Ubiquitous.

Its subcellular location is the secreted. It catalyses the reaction Endohydrolysis of (1-&gt;4)-beta-D-glucosidic linkages in cellulose, lichenin and cereal beta-D-glucans.. This chain is Endoglucanase 7 (GLU10), found in Oryza sativa subsp. japonica (Rice).